The following is a 77-amino-acid chain: U3-theraphotoxin-Hhn1k (77 aa).

Positions 1–14 (TFAGLVLLFVVCYA) are cleaved as a signal peptide. Positions 15–42 (SESEEKEFPKEMLSSIFAVDNDFKQEER) are excised as a propeptide. 2 disulfides stabilise this stretch: Cys-44-Cys-57 and Cys-56-Cys-69.

The protein belongs to the neurotoxin 10 (Hwtx-1) family. 51 (Hntx-8) subfamily. Hntx-8 sub-subfamily. Expressed by the venom gland.

The protein localises to the secreted. Ion channel inhibitor. In Cyriopagopus hainanus (Chinese bird spider), this protein is U3-theraphotoxin-Hhn1k.